Here is a 687-residue protein sequence, read N- to C-terminus: Polyphosphate kinase (687 aa).

Residue Asn-45 participates in ATP binding. Arg-375 and Arg-405 together coordinate Mg(2+). Residue His-435 is the Phosphohistidine intermediate of the active site. Positions 472, 568, and 596 each coordinate ATP.

Belongs to the polyphosphate kinase 1 (PPK1) family. Mg(2+) is required as a cofactor. An intermediate of this reaction is the autophosphorylated ppk in which a phosphate is covalently linked to a histidine residue through a N-P bond.

It catalyses the reaction [phosphate](n) + ATP = [phosphate](n+1) + ADP. In terms of biological role, catalyzes the reversible transfer of the terminal phosphate of ATP to form a long-chain polyphosphate (polyP). The protein is Polyphosphate kinase of Burkholderia ambifaria (strain ATCC BAA-244 / DSM 16087 / CCUG 44356 / LMG 19182 / AMMD) (Burkholderia cepacia (strain AMMD)).